Consider the following 466-residue polypeptide: ATP synthase subunit beta (466 aa).

155-162 provides a ligand contact to ATP; that stretch reads GGAGVGKT.

This sequence belongs to the ATPase alpha/beta chains family. In terms of assembly, F-type ATPases have 2 components, CF(1) - the catalytic core - and CF(0) - the membrane proton channel. CF(1) has five subunits: alpha(3), beta(3), gamma(1), delta(1), epsilon(1). CF(0) has three main subunits: a(1), b(2) and c(9-12). The alpha and beta chains form an alternating ring which encloses part of the gamma chain. CF(1) is attached to CF(0) by a central stalk formed by the gamma and epsilon chains, while a peripheral stalk is formed by the delta and b chains.

Its subcellular location is the cell inner membrane. The enzyme catalyses ATP + H2O + 4 H(+)(in) = ADP + phosphate + 5 H(+)(out). Functionally, produces ATP from ADP in the presence of a proton gradient across the membrane. The catalytic sites are hosted primarily by the beta subunits. In Aromatoleum aromaticum (strain DSM 19018 / LMG 30748 / EbN1) (Azoarcus sp. (strain EbN1)), this protein is ATP synthase subunit beta.